A 336-amino-acid chain; its full sequence is Probable deoxyhypusine synthase (336 aa).

Residue K308 is the Nucleophile of the active site.

Belongs to the deoxyhypusine synthase family. The cofactor is NAD(+).

It catalyses the reaction [eIF5A protein]-L-lysine + spermidine = [eIF5A protein]-deoxyhypusine + propane-1,3-diamine. It participates in protein modification; eIF5A hypusination. Functionally, catalyzes the NAD-dependent oxidative cleavage of spermidine and the subsequent transfer of the butylamine moiety of spermidine to the epsilon-amino group of a specific lysine residue of the eIF-5A precursor protein to form the intermediate deoxyhypusine residue. This Pyrococcus furiosus (strain ATCC 43587 / DSM 3638 / JCM 8422 / Vc1) protein is Probable deoxyhypusine synthase.